Here is a 159-residue protein sequence, read N- to C-terminus: Sperm acrosome-associated protein 5 (159 aa).

Positions Met-1 to Ala-21 are cleaved as a signal peptide. Positions Lys-22–His-150 constitute a C-type lysozyme domain. 4 disulfides stabilise this stretch: Cys-27–Cys-147, Cys-51–Cys-135, Cys-85–Cys-100, and Cys-96–Cys-114. Residue Glu-56 is part of the active site.

It belongs to the glycosyl hydrolase 22 family.

It is found in the secreted. It catalyses the reaction Hydrolysis of (1-&gt;4)-beta-linkages between N-acetylmuramic acid and N-acetyl-D-glucosamine residues in a peptidoglycan and between N-acetyl-D-glucosamine residues in chitodextrins.. This Homo sapiens (Human) protein is Sperm acrosome-associated protein 5 (SPACA5).